The following is a 471-amino-acid chain: tRNA-2-methylthio-N(6)-dimethylallyladenosine synthase (471 aa).

The 119-residue stretch at 31-149 folds into the MTTase N-terminal domain; sequence LYYHIETYGC…FPQLLWEALN (119 aa). Residues C40, C76, C110, C186, C190, and C193 each contribute to the [4Fe-4S] cluster site. Residues 172-402 form the Radical SAM core domain; the sequence is RDSNLKAWVN…IELQNKISLE (231 aa). Residues 405 to 468 enclose the TRAM domain; it reads AELRGKIVEV…AWTMQGELVE (64 aa).

It belongs to the methylthiotransferase family. MiaB subfamily. Monomer. It depends on [4Fe-4S] cluster as a cofactor.

It localises to the cytoplasm. The catalysed reaction is N(6)-dimethylallyladenosine(37) in tRNA + (sulfur carrier)-SH + AH2 + 2 S-adenosyl-L-methionine = 2-methylsulfanyl-N(6)-dimethylallyladenosine(37) in tRNA + (sulfur carrier)-H + 5'-deoxyadenosine + L-methionine + A + S-adenosyl-L-homocysteine + 2 H(+). Catalyzes the methylthiolation of N6-(dimethylallyl)adenosine (i(6)A), leading to the formation of 2-methylthio-N6-(dimethylallyl)adenosine (ms(2)i(6)A) at position 37 in tRNAs that read codons beginning with uridine. In Thermoanaerobacter pseudethanolicus (strain ATCC 33223 / 39E) (Clostridium thermohydrosulfuricum), this protein is tRNA-2-methylthio-N(6)-dimethylallyladenosine synthase.